The primary structure comprises 633 residues: MPRINFIFGVHNHQPLGNFEWIIKRAYEKAYRPFLETLEEYPNMKVAVHISGVLVEWLERNRPEYIDLLKSLIKKGQVELVVAGFYEPILVAIPEEDRVEQIKLSKGWARKMGYEARGLWLTERVWEPELVKTLREAGIEYVILDDYHFMSAGLSKEELFWPYYTENGGEAIVVFPIDEKLRYLIPFRPVNETLEYLHSLADEDESKVAVFHDDGEKFGAWPGTHELVYERGWLKEFFDRISSDDKINLMLYSEYLSKFRPKGLVYLPIASYFEMSEWSLPARQAKLFFEFIKKLKELNLFEKYRIFVRGGIWKNFLYKYPEGNYMHKRMLMLSKLLRNNPTARIFVLRAQCNDAYWHGVFGGIYLPHIRRAVWRNLIKAHSYLEPENRVFDLDFDGGEEIMLENENFILVVKPHYGGAIFEMSSKKKYVNYLDVVARRWEHYHSLKDIPEGMKRELSYDKWPRGMLQDHFLLPTEVLDNYMLSKYRELGDFLMSSYHYQIEDKLRLWRSGKVKGISVEVEKVLRLNKDGFTTEYRIVSKEELGLMFGVEINLAVQGTVEYPAEFMSKEIEVKDIFGKVKIESEKEAKIWKFPIKTLSQSESGWDFVQQGVSYTFLYPIEKMLNIKLKFKESM.

Glu123 serves as the catalytic Nucleophile. The Proton donor role is filled by Asp214.

The protein belongs to the glycosyl hydrolase 57 family.

It catalyses the reaction Endohydrolysis of (1-&gt;4)-alpha-D-glucosidic linkages in polysaccharides containing three or more (1-&gt;4)-alpha-linked D-glucose units.. The sequence is that of Alpha-amylase (amyA) from Pyrococcus horikoshii (strain ATCC 700860 / DSM 12428 / JCM 9974 / NBRC 100139 / OT-3).